The following is a 548-amino-acid chain: Glucose-6-phosphate isomerase 1 (548 aa).

Glu353 serves as the catalytic Proton donor. Active-site residues include His384 and Lys512.

This sequence belongs to the GPI family.

Its subcellular location is the cytoplasm. The enzyme catalyses alpha-D-glucose 6-phosphate = beta-D-fructose 6-phosphate. It functions in the pathway carbohydrate biosynthesis; gluconeogenesis. The protein operates within carbohydrate degradation; glycolysis; D-glyceraldehyde 3-phosphate and glycerone phosphate from D-glucose: step 2/4. In terms of biological role, catalyzes the reversible isomerization of glucose-6-phosphate to fructose-6-phosphate. The chain is Glucose-6-phosphate isomerase 1 from Neisseria gonorrhoeae (strain ATCC 700825 / FA 1090).